The sequence spans 669 residues: Probable pectinesterase/pectinesterase inhibitor 21 (669 aa).

Residues 16–36 (IVITISSVLLISMVVAVTVGV) traverse the membrane as a helical segment. 5 N-linked (GlcNAc...) asparagine glycosylation sites follow: Asn52, Asn81, Asn94, Asn281, and Asn300. The segment at 52 to 205 (NASVKAVKDV…IELTHNGLAI (154 aa)) is pectinesterase inhibitor 21. Positions 255 to 551 (DIVVAQDGSG…FTPAQYIQGD (297 aa)) are pectinesterase 21. Thr330 and Gln360 together coordinate substrate. The Proton donor; for pectinesterase activity role is filled by Asp383. A disulfide bridge connects residues Cys397 and Cys417. Asp404 serves as the catalytic Nucleophile; for pectinesterase activity. Asn416 carries N-linked (GlcNAc...) asparagine glycosylation. Residues Arg472 and Trp474 each coordinate substrate. Positions 615-669 (AYTGTASPESSIKVSSSTETASPESSFTEASTASPESSIMVASTESSGSFFSMFT) are disordered. Polar residues predominate over residues 616-628 (YTGTASPESSIKV). The span at 629–652 (SSSTETASPESSFTEASTASPESS) shows a compositional bias: low complexity. Positions 654–669 (MVASTESSGSFFSMFT) are enriched in polar residues.

The protein in the N-terminal section; belongs to the PMEI family. It in the C-terminal section; belongs to the pectinesterase family. In terms of tissue distribution, expressed in flower buds.

It is found in the membrane. It carries out the reaction [(1-&gt;4)-alpha-D-galacturonosyl methyl ester](n) + n H2O = [(1-&gt;4)-alpha-D-galacturonosyl](n) + n methanol + n H(+). It functions in the pathway glycan metabolism; pectin degradation; 2-dehydro-3-deoxy-D-gluconate from pectin: step 1/5. Its function is as follows. Acts in the modification of cell walls via demethylesterification of cell wall pectin. The protein is Probable pectinesterase/pectinesterase inhibitor 21 (PME21) of Arabidopsis thaliana (Mouse-ear cress).